The sequence spans 612 residues: tRNA(Met) cytidine acetyltransferase TmcA (612 aa).

ATP-binding positions include Q136, 161–170, and R284; that span reads GRGKSTLLGQ. The 181-residue stretch at 319 to 499 folds into the N-acetyltransferase domain; the sequence is KHASELEEAL…PAAIYALPLT (181 aa). Residue 424–426 participates in acetyl-CoA binding; the sequence is IAV.

The protein belongs to the RNA cytidine acetyltransferase family. TmcA subfamily.

The protein localises to the cytoplasm. It catalyses the reaction cytidine(34) in elongator tRNA(Met) + acetyl-CoA + ATP + H2O = N(4)-acetylcytidine(34) in elongator tRNA(Met) + ADP + phosphate + CoA + H(+). Its function is as follows. Catalyzes the formation of N(4)-acetylcytidine (ac(4)C) at the wobble position of tRNA(Met), by using acetyl-CoA as an acetyl donor and ATP (or GTP). In Idiomarina loihiensis (strain ATCC BAA-735 / DSM 15497 / L2-TR), this protein is tRNA(Met) cytidine acetyltransferase TmcA.